We begin with the raw amino-acid sequence, 206 residues long: N-(5'-phosphoribosyl)anthranilate isomerase (206 aa).

It belongs to the TrpF family.

It carries out the reaction N-(5-phospho-beta-D-ribosyl)anthranilate = 1-(2-carboxyphenylamino)-1-deoxy-D-ribulose 5-phosphate. Its pathway is amino-acid biosynthesis; L-tryptophan biosynthesis; L-tryptophan from chorismate: step 3/5. The sequence is that of N-(5'-phosphoribosyl)anthranilate isomerase from Pseudomonas putida (strain GB-1).